The sequence spans 263 residues: Proteasome subunit beta type-5 (263 aa).

A propeptide spans 1–59 (removed in mature form); that stretch reads MALASVLERPLSVNRRGFFGLGGRADLLDLGPGSPSDGLSLAAPSWGVPEEPRIEILHG. Thr60 serves as the catalytic Nucleophile. Ala108 provides a ligand contact to bortezomib.

This sequence belongs to the peptidase T1B family. As to quaternary structure, the 26S proteasome consists of a 20S proteasome core and two 19S regulatory subunits. The 20S proteasome core is a barrel-shaped complex made of 28 subunits that are arranged in four stacked rings. The two outer rings are each formed by seven alpha subunits, and the two inner rings are formed by seven beta subunits. The proteolytic activity is exerted by three beta-subunits PSMB5, PSMB6 and PSMB7. Directly interacts with POMP. Interacts with ABCB1 and TAP1.

The protein resides in the cytoplasm. It localises to the nucleus. The catalysed reaction is Cleavage of peptide bonds with very broad specificity.. Functionally, component of the 20S core proteasome complex involved in the proteolytic degradation of most intracellular proteins. This complex plays numerous essential roles within the cell by associating with different regulatory particles. Associated with two 19S regulatory particles, forms the 26S proteasome and thus participates in the ATP-dependent degradation of ubiquitinated proteins. The 26S proteasome plays a key role in the maintenance of protein homeostasis by removing misfolded or damaged proteins that could impair cellular functions, and by removing proteins whose functions are no longer required. Associated with the PA200 or PA28, the 20S proteasome mediates ubiquitin-independent protein degradation. This type of proteolysis is required in several pathways including spermatogenesis (20S-PA200 complex) or generation of a subset of MHC class I-presented antigenic peptides (20S-PA28 complex). Within the 20S core complex, PSMB5 displays a chymotrypsin-like activity. This chain is Proteasome subunit beta type-5, found in Bos taurus (Bovine).